The chain runs to 113 residues: Ig heavy chain V region 36-60 (113 aa).

This is Ig heavy chain V region 36-60 from Mus musculus (Mouse).